The chain runs to 122 residues: Small ribosomal subunit protein uS13 (122 aa).

The disordered stretch occupies residues 96-122; it reads PVRGQRTRTNARTRKGPKKTVGVRRAK.

Belongs to the universal ribosomal protein uS13 family. Part of the 30S ribosomal subunit. Forms a loose heterodimer with protein S19. Forms two bridges to the 50S subunit in the 70S ribosome.

In terms of biological role, located at the top of the head of the 30S subunit, it contacts several helices of the 16S rRNA. In the 70S ribosome it contacts the 23S rRNA (bridge B1a) and protein L5 of the 50S subunit (bridge B1b), connecting the 2 subunits; these bridges are implicated in subunit movement. Contacts the tRNAs in the A and P-sites. The chain is Small ribosomal subunit protein uS13 from Halothermothrix orenii (strain H 168 / OCM 544 / DSM 9562).